An 83-amino-acid chain; its full sequence is Bowman-Birk type proteinase inhibitor (83 aa).

7 disulfide bridges follow: cysteine 18–cysteine 72, cysteine 19–cysteine 34, cysteine 22–cysteine 68, cysteine 24–cysteine 32, cysteine 42–cysteine 49, cysteine 46–cysteine 61, and cysteine 51–cysteine 59.

The protein belongs to the Bowman-Birk serine protease inhibitor family.

The sequence is that of Bowman-Birk type proteinase inhibitor from Phaseolus lunatus (Lima bean).